A 140-amino-acid polypeptide reads, in one-letter code: Ribosome-binding factor A (140 aa).

The segment at arginine 116–serine 140 is disordered.

Belongs to the RbfA family. Monomer. Binds 30S ribosomal subunits, but not 50S ribosomal subunits or 70S ribosomes.

Its subcellular location is the cytoplasm. Functionally, one of several proteins that assist in the late maturation steps of the functional core of the 30S ribosomal subunit. Associates with free 30S ribosomal subunits (but not with 30S subunits that are part of 70S ribosomes or polysomes). Required for efficient processing of 16S rRNA. May interact with the 5'-terminal helix region of 16S rRNA. In Synechococcus sp. (strain WH7803), this protein is Ribosome-binding factor A.